The following is a 170-amino-acid chain: MKTLFLGVTLGLAAALSFTLEEEDITGTWYVKAMVVDKDFPEDRRPRKVSPVKVTALGGGNLEATFTFMREDRCIQKKILMRKTEEPGKFSAYGGRKLIYLQELPGTDDYVFYCKDQRRGGLRYMGKLVGRNPNTNLEALEEFKKLVQHKGLSEEDIFMPLQTGSCVLEH.

The first 15 residues, 1–15, serve as a signal peptide directing secretion; sequence MKTLFLGVTLGLAAA. A disulfide bond links C74 and C166.

This sequence belongs to the calycin superfamily. Lipocalin family. Monomer. As to expression, strongly expressed in the nasal structures, salivary and lachrymal glands, and lung. Expressed in the liver.

The protein resides in the secreted. In terms of biological role, binds and transports small hydrophobic volatile molecules with a higher affinity for aldehydes and large fatty acids, including undecanal, palmitic acid, efficient aldehydes, benzenic aldehydes, heterocyclic aldehydes and aliphatic acids. The sequence is that of Odorant-binding protein 2a (OBP2A) from Homo sapiens (Human).